The primary structure comprises 299 residues: Elongation factor Ts (299 aa).

Positions 81–84 are involved in Mg(2+) ion dislocation from EF-Tu; the sequence is TDFV.

This sequence belongs to the EF-Ts family.

The protein localises to the cytoplasm. Functionally, associates with the EF-Tu.GDP complex and induces the exchange of GDP to GTP. It remains bound to the aminoacyl-tRNA.EF-Tu.GTP complex up to the GTP hydrolysis stage on the ribosome. This is Elongation factor Ts from Halothermothrix orenii (strain H 168 / OCM 544 / DSM 9562).